The chain runs to 62 residues: Photosystem II reaction center protein Z (62 aa).

Transmembrane regions (helical) follow at residues 8 to 28 (VLTA…VAYA) and 41 to 61 (YVGS…NFLV).

It belongs to the PsbZ family. In terms of assembly, PSII is composed of 1 copy each of membrane proteins PsbA, PsbB, PsbC, PsbD, PsbE, PsbF, PsbH, PsbI, PsbJ, PsbK, PsbL, PsbM, PsbT, PsbX, PsbY, PsbZ, Psb30/Ycf12, peripheral proteins PsbO, CyanoQ (PsbQ), PsbU, PsbV and a large number of cofactors. It forms dimeric complexes.

It is found in the cellular thylakoid membrane. Functionally, may control the interaction of photosystem II (PSII) cores with the light-harvesting antenna, regulates electron flow through the 2 photosystem reaction centers. PSII is a light-driven water plastoquinone oxidoreductase, using light energy to abstract electrons from H(2)O, generating a proton gradient subsequently used for ATP formation. This is Photosystem II reaction center protein Z from Crocosphaera subtropica (strain ATCC 51142 / BH68) (Cyanothece sp. (strain ATCC 51142)).